Here is a 339-residue protein sequence, read N- to C-terminus: NADH-quinone oxidoreductase subunit H (339 aa).

A run of 9 helical transmembrane segments spans residues 9–29, 50–70, 82–102, 115–135, 161–181, 187–207, 235–255, 275–295, and 311–331; these read IFPL…LILC, PNVV…KLLF, ILFI…WAVI, VGVL…IIAG, MGLV…SEII, MPWW…ISVL, MGFA…SAMT, IPGF…FLWI, and GWKV…SVLV.

Belongs to the complex I subunit 1 family. As to quaternary structure, NDH-1 is composed of 14 different subunits. Subunits NuoA, H, J, K, L, M, N constitute the membrane sector of the complex.

The protein resides in the cell inner membrane. The enzyme catalyses a quinone + NADH + 5 H(+)(in) = a quinol + NAD(+) + 4 H(+)(out). NDH-1 shuttles electrons from NADH, via FMN and iron-sulfur (Fe-S) centers, to quinones in the respiratory chain. The immediate electron acceptor for the enzyme in this species is believed to be ubiquinone. Couples the redox reaction to proton translocation (for every two electrons transferred, four hydrogen ions are translocated across the cytoplasmic membrane), and thus conserves the redox energy in a proton gradient. This subunit may bind ubiquinone. The polypeptide is NADH-quinone oxidoreductase subunit H (Rickettsia peacockii (strain Rustic)).